A 232-amino-acid polypeptide reads, in one-letter code: 7-cyano-7-deazaguanine synthase (232 aa).

Position 7–17 (7–17) interacts with ATP; that stretch reads CSGGLDSVSLA. Positions 185, 193, 196, and 199 each coordinate Zn(2+).

The protein belongs to the QueC family. Zn(2+) serves as cofactor.

It carries out the reaction 7-carboxy-7-deazaguanine + NH4(+) + ATP = 7-cyano-7-deazaguanine + ADP + phosphate + H2O + H(+). It participates in purine metabolism; 7-cyano-7-deazaguanine biosynthesis. Its function is as follows. Catalyzes the ATP-dependent conversion of 7-carboxy-7-deazaguanine (CDG) to 7-cyano-7-deazaguanine (preQ(0)). This Brucella canis (strain ATCC 23365 / NCTC 10854 / RM-666) protein is 7-cyano-7-deazaguanine synthase.